Consider the following 218-residue polypeptide: Glycerol-3-phosphate acyltransferase (218 aa).

A run of 5 helical transmembrane segments spans residues 10 to 30 (LTLGIAIVGGYLLGSIPFGLI), 60 to 80 (DLAAITLLGDAGKGVVAVLLA), 88 to 108 (PAIIALAGGSAFLGHLFPVWL), 125 to 145 (SAAWPVGVAAGATWLAMAFLF), and 165 to 185 (AFDQPYPFMGLCLFMAVLIFI).

Belongs to the PlsY family. In terms of assembly, probably interacts with PlsX.

The protein resides in the cell inner membrane. The enzyme catalyses an acyl phosphate + sn-glycerol 3-phosphate = a 1-acyl-sn-glycero-3-phosphate + phosphate. It functions in the pathway lipid metabolism; phospholipid metabolism. In terms of biological role, catalyzes the transfer of an acyl group from acyl-phosphate (acyl-PO(4)) to glycerol-3-phosphate (G3P) to form lysophosphatidic acid (LPA). This enzyme utilizes acyl-phosphate as fatty acyl donor, but not acyl-CoA or acyl-ACP. This Caulobacter vibrioides (strain ATCC 19089 / CIP 103742 / CB 15) (Caulobacter crescentus) protein is Glycerol-3-phosphate acyltransferase.